Here is a 166-residue protein sequence, read N- to C-terminus: Biotin carboxyl carrier protein of acetyl-CoA carboxylase (166 aa).

Over residues 61-70 the composition is skewed to polar residues; the sequence is STASEASSPA. Residues 61-82 form a disordered region; sequence STASEASSPASVKDVPVEEQPQ. The Biotinyl-binding domain maps to 90–166; it reads GDIVESPLVG…EFGQGLVRIK (77 aa). Lys-132 is modified (N6-biotinyllysine).

As to quaternary structure, homodimer.

It participates in lipid metabolism; fatty acid biosynthesis. Functionally, this protein is a component of the acetyl coenzyme A carboxylase complex; first, biotin carboxylase catalyzes the carboxylation of the carrier protein and then the transcarboxylase transfers the carboxyl group to form malonyl-CoA. The chain is Biotin carboxyl carrier protein of acetyl-CoA carboxylase from Streptococcus pyogenes serotype M6 (strain ATCC BAA-946 / MGAS10394).